Here is a 125-residue protein sequence, read N- to C-terminus: Large ribosomal subunit protein bL12 (125 aa).

Belongs to the bacterial ribosomal protein bL12 family. As to quaternary structure, homodimer. Part of the ribosomal stalk of the 50S ribosomal subunit. Forms a multimeric L10(L12)X complex, where L10 forms an elongated spine to which 2 to 4 L12 dimers bind in a sequential fashion. Binds GTP-bound translation factors.

Its function is as follows. Forms part of the ribosomal stalk which helps the ribosome interact with GTP-bound translation factors. Is thus essential for accurate translation. This is Large ribosomal subunit protein bL12 from Campylobacter lari (strain RM2100 / D67 / ATCC BAA-1060).